Reading from the N-terminus, the 185-residue chain is Ribosome-recycling factor (185 aa).

The protein belongs to the RRF family.

It is found in the cytoplasm. Responsible for the release of ribosomes from messenger RNA at the termination of protein biosynthesis. May increase the efficiency of translation by recycling ribosomes from one round of translation to another. The polypeptide is Ribosome-recycling factor (Pseudomonas fluorescens (strain SBW25)).